We begin with the raw amino-acid sequence, 561 residues long: Glutamine--tRNA ligase (561 aa).

Positions 34–44 (PEPNGYLHIGH) match the 'HIGH' region motif. ATP-binding positions include 35-37 (EPN) and 41-47 (HIGHAKS). 2 residues coordinate L-glutamine: aspartate 67 and tyrosine 212. Residues threonine 231, 261-262 (RL), and 269-271 (MSK) contribute to the ATP site. The short motif at 268-272 (VMSKR) is the 'KMSKS' region element.

The protein belongs to the class-I aminoacyl-tRNA synthetase family. As to quaternary structure, monomer.

Its subcellular location is the cytoplasm. It catalyses the reaction tRNA(Gln) + L-glutamine + ATP = L-glutaminyl-tRNA(Gln) + AMP + diphosphate. The protein is Glutamine--tRNA ligase of Idiomarina loihiensis (strain ATCC BAA-735 / DSM 15497 / L2-TR).